Consider the following 119-residue polypeptide: NADH-quinone oxidoreductase subunit A (119 aa).

Transmembrane regions (helical) follow at residues 9–29 (VILF…LGFL), 63–83 (LVAI…PWAV), and 88–108 (IGAT…VGFV).

It belongs to the complex I subunit 3 family. In terms of assembly, NDH-1 is composed of 14 different subunits. Subunits NuoA, H, J, K, L, M, N constitute the membrane sector of the complex.

Its subcellular location is the cell inner membrane. It carries out the reaction a quinone + NADH + 5 H(+)(in) = a quinol + NAD(+) + 4 H(+)(out). Functionally, NDH-1 shuttles electrons from NADH, via FMN and iron-sulfur (Fe-S) centers, to quinones in the respiratory chain. The immediate electron acceptor for the enzyme in this species is believed to be ubiquinone. Couples the redox reaction to proton translocation (for every two electrons transferred, four hydrogen ions are translocated across the cytoplasmic membrane), and thus conserves the redox energy in a proton gradient. This is NADH-quinone oxidoreductase subunit A from Leptothrix cholodnii (strain ATCC 51168 / LMG 8142 / SP-6) (Leptothrix discophora (strain SP-6)).